A 350-amino-acid polypeptide reads, in one-letter code: Probable poly-beta-1,6-N-acetyl-D-glucosamine export protein (350 aa).

The next 10 membrane-spanning stretches (helical) occupy residues 8 to 28 (LVYL…LTQI), 40 to 60 (LVLQ…FIIL), 83 to 103 (YILI…SLLT), 119 to 139 (QWYG…YIIF), 146 to 166 (FNSK…LYYF), 182 to 202 (LSEN…AYMG), 216 to 236 (LVIM…LANG), 254 to 274 (IMFI…FNTI), 276 to 296 (MISA…DSLF), and 308 to 328 (VFLA…GMIL).

The protein belongs to the acyltransferase 3 family.

Its subcellular location is the cell membrane. Functionally, presumably involved in the export of the biofilm adhesin polysaccharide poly-beta-1,6-N-acetyl-D-glucosamine (PNAG, also referred to as PIA) across the cell membrane. The chain is Probable poly-beta-1,6-N-acetyl-D-glucosamine export protein (icaC) from Staphylococcus aureus (strain NCTC 8325 / PS 47).